The following is a 331-amino-acid chain: Adenosine deaminase (331 aa).

Residues H12 and H14 each coordinate Zn(2+). Residues H14, D16, and G170 each coordinate substrate. H197 is a Zn(2+) binding site. The active-site Proton donor is the E200. D278 contributes to the Zn(2+) binding site.

The protein belongs to the metallo-dependent hydrolases superfamily. Adenosine and AMP deaminases family. Adenosine deaminase subfamily. Requires Zn(2+) as cofactor.

The enzyme catalyses adenosine + H2O + H(+) = inosine + NH4(+). It carries out the reaction 2'-deoxyadenosine + H2O + H(+) = 2'-deoxyinosine + NH4(+). In terms of biological role, catalyzes the hydrolytic deamination of adenosine and 2-deoxyadenosine. The polypeptide is Adenosine deaminase (Shewanella woodyi (strain ATCC 51908 / MS32)).